A 517-amino-acid polypeptide reads, in one-letter code: Splicing factor U2AF 59 kDa subunit (517 aa).

Over residues 1 to 13 the composition is skewed to low complexity; it reads MDLSSRLSSGSSR. Positions 1-112 are disordered; that stretch reads MDLSSRLSSG…PSRERSVRSI (112 aa). Positions 20–89 are enriched in basic and acidic residues; it reads DYRDEEPRRE…RRYDDYEPRS (70 aa). RRM domains lie at 310–388 and 418–509; these read DKIY…FACV and RVLQ…FYGE.

Belongs to the splicing factor SR family. Forms a heterodimer with the U2AF small subunit. Can also form a homodimer. U2AF large subunit (U2AF59), U2AF small subunit (U2AF23) and SF1 (bpb1) interact to form a complex required for complex A formation. Interacts with wat1/pop3.

It is found in the nucleus. Necessary for the splicing of pre-mRNA. The SF1-U2AF59-U2AF23 complex has a role in the recognition of the branch site (5'-UACUAAC-3'), the pyrimidine tract and the 3'-splice site at the 3'-end of introns. This chain is Splicing factor U2AF 59 kDa subunit (prp2), found in Schizosaccharomyces pombe (strain 972 / ATCC 24843) (Fission yeast).